A 117-amino-acid chain; its full sequence is Immunoglobulin kappa variable 1-17 (117 aa).

The signal sequence occupies residues 1–22 (MDMRVPAQLLGLLLLWFPGARC). Residues 23-45 (DIQMTQSPSSLSASVGDRVTITC) form a framework-1 region. The Ig-like domain maps to 24-117 (IQMTQSPSSL…YYCLQHNSYP (94 aa)). A disulfide bond links Cys-45 and Cys-110. The segment at 46–56 (RASQGIRNDLG) is complementarity-determining-1. The framework-2 stretch occupies residues 57–71 (WYQQKPGKAPKRLIY). The segment at 72–78 (AASSLQS) is complementarity-determining-2. Residues 79–110 (GVPSRFSGSGSGTEFTLTISSLQPEDFATYYC) form a framework-3 region. Positions 111-117 (LQHNSYP) are complementarity-determining-3.

As to quaternary structure, immunoglobulins are composed of two identical heavy chains and two identical light chains; disulfide-linked.

It localises to the secreted. The protein resides in the cell membrane. Functionally, v region of the variable domain of immunoglobulin light chains that participates in the antigen recognition. Immunoglobulins, also known as antibodies, are membrane-bound or secreted glycoproteins produced by B lymphocytes. In the recognition phase of humoral immunity, the membrane-bound immunoglobulins serve as receptors which, upon binding of a specific antigen, trigger the clonal expansion and differentiation of B lymphocytes into immunoglobulins-secreting plasma cells. Secreted immunoglobulins mediate the effector phase of humoral immunity, which results in the elimination of bound antigens. The antigen binding site is formed by the variable domain of one heavy chain, together with that of its associated light chain. Thus, each immunoglobulin has two antigen binding sites with remarkable affinity for a particular antigen. The variable domains are assembled by a process called V-(D)-J rearrangement and can then be subjected to somatic hypermutations which, after exposure to antigen and selection, allow affinity maturation for a particular antigen. This is Immunoglobulin kappa variable 1-17 from Homo sapiens (Human).